Reading from the N-terminus, the 117-residue chain is Ig heavy chain V region UPC10 (117 aa).

Positions 1-116 (EVKLLESGGG…WGQVTTLTVS (116 aa)) constitute an Ig-like domain.

The polypeptide is Ig heavy chain V region UPC10 (Mus musculus (Mouse)).